The sequence spans 919 residues: Isoleucine--tRNA ligase (919 aa).

The 'HIGH' region signature appears at 57-67; that stretch reads PYANGHIHIGT. Glu-553 serves as a coordination point for L-isoleucyl-5'-AMP. Residues 594-598 carry the 'KMSKS' region motif; it reads KMSKS. Lys-597 provides a ligand contact to ATP. The Zn(2+) site is built by Cys-887, Cys-890, Cys-907, and Cys-910.

It belongs to the class-I aminoacyl-tRNA synthetase family. IleS type 1 subfamily. Monomer. Requires Zn(2+) as cofactor.

It localises to the cytoplasm. It catalyses the reaction tRNA(Ile) + L-isoleucine + ATP = L-isoleucyl-tRNA(Ile) + AMP + diphosphate. Catalyzes the attachment of isoleucine to tRNA(Ile). As IleRS can inadvertently accommodate and process structurally similar amino acids such as valine, to avoid such errors it has two additional distinct tRNA(Ile)-dependent editing activities. One activity is designated as 'pretransfer' editing and involves the hydrolysis of activated Val-AMP. The other activity is designated 'posttransfer' editing and involves deacylation of mischarged Val-tRNA(Ile). In Thermotoga maritima (strain ATCC 43589 / DSM 3109 / JCM 10099 / NBRC 100826 / MSB8), this protein is Isoleucine--tRNA ligase.